The sequence spans 853 residues: Probable inorganic carbon transporter subunit DabA (853 aa).

Residues 1-21 form a disordered region; it reads MSHANSEETMMNTAVAHPSTS. The segment covering 7–21 has biased composition (polar residues); sequence EETMMNTAVAHPSTS. The Zn(2+) site is built by Cys-364, Asp-366, His-546, and Cys-561.

This sequence belongs to the inorganic carbon transporter (TC 9.A.2) DabA family. In terms of assembly, forms a complex with DabB. It depends on Zn(2+) as a cofactor.

It is found in the cell inner membrane. Its function is as follows. Part of an energy-coupled inorganic carbon pump. This chain is Probable inorganic carbon transporter subunit DabA, found in Methylovorus glucosotrophus (strain SIP3-4).